We begin with the raw amino-acid sequence, 327 residues long: uncharacterized protein (327 aa).

An S4 RNA-binding domain is found at 32 to 105 (VRLDKWLAEQ…IPLDILYEDE (74 aa)). Residue Asp-156 is part of the active site.

The protein belongs to the pseudouridine synthase RluA family.

It carries out the reaction a uridine in RNA = a pseudouridine in RNA. This is an uncharacterized protein from Synechocystis sp. (strain ATCC 27184 / PCC 6803 / Kazusa).